A 252-amino-acid chain; its full sequence is MSVSPVSIVSTPVAVSASPAGSPDQPAPPVTVRWRGVETYEASFDAMRAFTDARTADTGDEIWLVEHPPVYTLGQAGDPSHLLVADSGVPLVKVDRGGQITYHGPGQIVAYLLLDLRRRKLMVRTLVTKIEEAVIETLAAYNLASVRKAGAPGIYVASGVHEGAKIAALGLKIRNGCSYHGLSLNVKMDLRPFLAINPCGYAGLETVDMASLEVAADWNDVAHTLVRRLIANLDGASAAADKPQALEQHSND.

The BPL/LPL catalytic domain occupies 56 to 237 (ADTGDEIWLV…RLIANLDGAS (182 aa)). Substrate-binding positions include 96-103 (RGGQITYH), 168-170 (ALG), and 181-183 (GLS). Catalysis depends on C199, which acts as the Acyl-thioester intermediate.

The protein belongs to the LipB family.

It localises to the cytoplasm. It carries out the reaction octanoyl-[ACP] + L-lysyl-[protein] = N(6)-octanoyl-L-lysyl-[protein] + holo-[ACP] + H(+). It functions in the pathway protein modification; protein lipoylation via endogenous pathway; protein N(6)-(lipoyl)lysine from octanoyl-[acyl-carrier-protein]: step 1/2. Catalyzes the transfer of endogenously produced octanoic acid from octanoyl-acyl-carrier-protein onto the lipoyl domains of lipoate-dependent enzymes. Lipoyl-ACP can also act as a substrate although octanoyl-ACP is likely to be the physiological substrate. In Burkholderia lata (strain ATCC 17760 / DSM 23089 / LMG 22485 / NCIMB 9086 / R18194 / 383), this protein is Octanoyltransferase.